Here is a 386-residue protein sequence, read N- to C-terminus: MFEFLHQMSAPKLSTSILRYIFRYAQFIGVIFFCLHTRKDDKTVFIRNWLKWLNVTHRIITFTRFFWVYIASISIKTNRVLQVLHGMRLVLSIPNVAVILCYHIFRGPEIIDLINQFLRLFRQVSDLFKTKTPGFGGRRELILILLNLISFAHEQTYLWFTIRKGFSWRFLIDWWCDFYLVSATNIFIHINSIGYLSLGVLYSELNKYVYTNLRIQLQKLNTSGSKQKIRRVQNRLEKCISLYREIYHTSIMFHKLFVPLLFLALIYKVLLIALIGFNVAVEFYLNSFIFWILLGKHVLDLFLVTVSVEGAVNQFLNIGMQFGNVGDLSKFQTTLDTLFLHLRLGHFRVSILGLFDVTQMQYLQFLSALLSGLAFIAQYRMQVGNG.

Over 1-14 the chain is Cytoplasmic; that stretch reads MFEFLHQMSAPKLS. Residues 15-35 traverse the membrane as a helical segment; sequence TSILRYIFRYAQFIGVIFFCL. At 36 to 79 the chain is on the extracellular side; the sequence is HTRKDDKTVFIRNWLKWLNVTHRIITFTRFFWVYIASISIKTNR. An N-linked (GlcNAc...) asparagine glycan is attached at Asn54. Residues 80-100 form a helical membrane-spanning segment; sequence VLQVLHGMRLVLSIPNVAVIL. The Cytoplasmic segment spans residues 101–141; sequence CYHIFRGPEIIDLINQFLRLFRQVSDLFKTKTPGFGGRREL. A helical membrane pass occupies residues 142–162; that stretch reads ILILLNLISFAHEQTYLWFTI. The Extracellular portion of the chain corresponds to 163-169; that stretch reads RKGFSWR. A helical transmembrane segment spans residues 170–190; that stretch reads FLIDWWCDFYLVSATNIFIHI. Residues 191–256 are Cytoplasmic-facing; sequence NSIGYLSLGV…YHTSIMFHKL (66 aa). Residues 257–277 form a helical membrane-spanning segment; sequence FVPLLFLALIYKVLLIALIGF. Over 278 to 287 the chain is Extracellular; that stretch reads NVAVEFYLNS. The helical transmembrane segment at 288–308 threads the bilayer; it reads FIFWILLGKHVLDLFLVTVSV. Residues 309-356 lie on the Cytoplasmic side of the membrane; that stretch reads EGAVNQFLNIGMQFGNVGDLSKFQTTLDTLFLHLRLGHFRVSILGLFD. The helical transmembrane segment at 357 to 377 threads the bilayer; sequence VTQMQYLQFLSALLSGLAFIA. Over 378-386 the chain is Extracellular; it reads QYRMQVGNG.

Belongs to the insect chemoreceptor superfamily. Gustatory receptor (GR) family. Gr93a subfamily.

Its subcellular location is the cell membrane. In terms of biological role, probable gustatory receptor which mediates acceptance or avoidance behavior, depending on its substrates. The protein is Putative gustatory receptor 92a (Gr92a) of Drosophila melanogaster (Fruit fly).